A 349-amino-acid polypeptide reads, in one-letter code: UDP-N-acetylenolpyruvoylglucosamine reductase (349 aa).

The region spanning Gly-25–Arg-197 is the FAD-binding PCMH-type domain. Arg-173 is an active-site residue. Ser-249 serves as the catalytic Proton donor. The active site involves Glu-345.

The protein belongs to the MurB family. It depends on FAD as a cofactor.

The protein localises to the cytoplasm. It carries out the reaction UDP-N-acetyl-alpha-D-muramate + NADP(+) = UDP-N-acetyl-3-O-(1-carboxyvinyl)-alpha-D-glucosamine + NADPH + H(+). It participates in cell wall biogenesis; peptidoglycan biosynthesis. Its function is as follows. Cell wall formation. In Burkholderia multivorans (strain ATCC 17616 / 249), this protein is UDP-N-acetylenolpyruvoylglucosamine reductase.